The primary structure comprises 600 residues: Cytidine monophosphate-N-acetylneuraminic acid hydroxylase (600 aa).

The Rieske domain maps to 9-107 (LSPVEVASLK…VEMDENNRLL (99 aa)). 4 residues coordinate [2Fe-2S] cluster: Cys-49, His-51, Cys-70, and His-73.

The protein belongs to the CMP-Neu5Ac hydroxylase family. It depends on [2Fe-2S] cluster as a cofactor.

It is found in the cytoplasm. The enzyme catalyses CMP-N-acetyl-beta-neuraminate + 2 Fe(II)-[cytochrome b5] + O2 + 2 H(+) = CMP-N-glycoloyl-beta-neuraminate + 2 Fe(III)-[cytochrome b5] + H2O. Its pathway is amino-sugar metabolism; N-acetylneuraminate metabolism. In terms of biological role, sialic acids are components of carbohydrate chains of glycoconjugates and are involved in cell-cell recognition and cell-pathogen interactions. Catalyzes the conversion of CMP-N-acetylneuraminic acid (CMP-Neu5Ac) into its hydroxylated derivative CMP-N-glycolylneuraminic acid (CMP-Neu5Gc), a sialic acid abundantly expressed at the surface of many cells. This Pan paniscus (Pygmy chimpanzee) protein is Cytidine monophosphate-N-acetylneuraminic acid hydroxylase (CMAH).